The sequence spans 336 residues: Fructose-1,6-bisphosphatase class 1 (336 aa).

Mg(2+) contacts are provided by glutamate 90, aspartate 112, leucine 114, and aspartate 115. Residues 115-118 (DGSS), asparagine 211, and lysine 277 contribute to the substrate site. Glutamate 283 serves as a coordination point for Mg(2+).

The protein belongs to the FBPase class 1 family. As to quaternary structure, homotetramer. Mg(2+) is required as a cofactor.

It localises to the cytoplasm. The catalysed reaction is beta-D-fructose 1,6-bisphosphate + H2O = beta-D-fructose 6-phosphate + phosphate. Its pathway is carbohydrate biosynthesis; gluconeogenesis. This is Fructose-1,6-bisphosphatase class 1 from Pseudomonas paraeruginosa (strain DSM 24068 / PA7) (Pseudomonas aeruginosa (strain PA7)).